The following is a 370-amino-acid chain: Small ribosomal subunit biogenesis GTPase RsgA (370 aa).

Positions 111-270 constitute a CP-type G domain; the sequence is RSEGQILAAN…LIDTPGLRGV (160 aa). Residues 158–161 and 212–220 each bind GTP; these read TKAD and GQSGAGKST. Zn(2+)-binding residues include Cys-293, Cys-298, His-300, and Cys-306.

It belongs to the TRAFAC class YlqF/YawG GTPase family. RsgA subfamily. Monomer. Associates with 30S ribosomal subunit, binds 16S rRNA. Requires Zn(2+) as cofactor.

It is found in the cytoplasm. Its function is as follows. One of several proteins that assist in the late maturation steps of the functional core of the 30S ribosomal subunit. Helps release RbfA from mature subunits. May play a role in the assembly of ribosomal proteins into the subunit. Circularly permuted GTPase that catalyzes slow GTP hydrolysis, GTPase activity is stimulated by the 30S ribosomal subunit. The chain is Small ribosomal subunit biogenesis GTPase RsgA from Streptomyces avermitilis (strain ATCC 31267 / DSM 46492 / JCM 5070 / NBRC 14893 / NCIMB 12804 / NRRL 8165 / MA-4680).